We begin with the raw amino-acid sequence, 113 residues long: MQAKAVARTVRIAPRKARLVMDLIRGKQVGEAVSILNLTPRAASPIIEKVLKSAIANAEHNYEMDANNLVISQAFVDEGPTLKRFRPRAMGRASQINKRTSHITIVVSEKKEG.

It belongs to the universal ribosomal protein uL22 family. In terms of assembly, part of the 50S ribosomal subunit.

This protein binds specifically to 23S rRNA; its binding is stimulated by other ribosomal proteins, e.g. L4, L17, and L20. It is important during the early stages of 50S assembly. It makes multiple contacts with different domains of the 23S rRNA in the assembled 50S subunit and ribosome. In terms of biological role, the globular domain of the protein is located near the polypeptide exit tunnel on the outside of the subunit, while an extended beta-hairpin is found that lines the wall of the exit tunnel in the center of the 70S ribosome. The protein is Large ribosomal subunit protein uL22 of Bacillus subtilis (strain 168).